Consider the following 378-residue polypeptide: Manganese peroxidase 1 (378 aa).

The signal sequence occupies residues 1 to 21; sequence MAFKSLIAFVALAAAVRAAPT. Intrachain disulfides connect cysteine 24–cysteine 36, cysteine 35–cysteine 310, cysteine 54–cysteine 138, cysteine 274–cysteine 340, and cysteine 362–cysteine 369. Glutamate 56 and glutamate 60 together coordinate Mn(2+). The Proton acceptor role is filled by histidine 67. Residues aspartate 68, glycine 83, aspartate 85, and serine 87 each coordinate Ca(2+). N-linked (GlcNAc...) asparagine glycosylation is found at asparagine 97 and asparagine 152. Histidine 194 serves as a coordination point for heme b. Serine 195 contributes to the Ca(2+) binding site. Aspartate 200 lines the Mn(2+) pocket. 4 residues coordinate Ca(2+): aspartate 212, threonine 214, threonine 217, and aspartate 219. A glycan (N-linked (GlcNAc...) asparagine) is linked at asparagine 238.

The protein belongs to the peroxidase family. Ligninase subfamily. Ca(2+) is required as a cofactor. The cofactor is heme b.

The protein localises to the secreted. It catalyses the reaction 2 Mn(2+) + H2O2 + 2 H(+) = 2 Mn(3+) + 2 H2O. Its function is as follows. Catalyzes the oxidation of Mn(2+) to Mn(3+). The latter, acting as a diffusible redox mediator, is capable of oxidizing a variety of lignin compounds. The protein is Manganese peroxidase 1 (MNP1) of Phanerodontia chrysosporium (White-rot fungus).